The primary structure comprises 118 residues: Ribonuclease P protein component (118 aa).

This sequence belongs to the RnpA family. In terms of assembly, consists of a catalytic RNA component (M1 or rnpB) and a protein subunit.

The catalysed reaction is Endonucleolytic cleavage of RNA, removing 5'-extranucleotides from tRNA precursor.. Functionally, RNaseP catalyzes the removal of the 5'-leader sequence from pre-tRNA to produce the mature 5'-terminus. It can also cleave other RNA substrates such as 4.5S RNA. The protein component plays an auxiliary but essential role in vivo by binding to the 5'-leader sequence and broadening the substrate specificity of the ribozyme. This chain is Ribonuclease P protein component, found in Photobacterium profundum (strain SS9).